We begin with the raw amino-acid sequence, 206 residues long: Transmembrane emp24 domain-containing protein bai (206 aa).

The first 20 residues, 1–20 (MLKSLLCILLIFGCLCRIHG), serve as a signal peptide directing secretion. At 21–172 (VMFHLTPNTQ…RDTNEKTNSR (152 aa)) the chain is on the lumenal side. The 111-residue stretch at 30–140 (QKCLKEDIQA…LKPLEVDLKR (111 aa)) folds into the GOLD domain. Residues 173–193 (VLFFSIFSMCCLLGLATWQVL) traverse the membrane as a helical segment. Topologically, residues 194-206 (YLRRYFKAKKLIE) are cytoplasmic.

This sequence belongs to the EMP24/GP25L family.

It is found in the membrane. Eca and bai are essential, though not redundant, for dorsoventral patterning of the embryo. Specifically required during early embryogenesis for the activity of maternal tkv, while the zygotic tkv is not affected. The protein is Transmembrane emp24 domain-containing protein bai of Drosophila grimshawi (Hawaiian fruit fly).